The primary structure comprises 51 residues: Protein Tat (51 aa).

A compositionally biased stretch (polar residues) spans 1 to 25 (EAETATKSCSGRQANQVSLPKQPAS). The interval 1–51 (EAETATKSCSGRQANQVSLPKQPASQPRGDPTGPKESKKKVETETETDPVN) is disordered. Lys-21 is covalently cross-linked (Glycyl lysine isopeptide (Lys-Gly) (interchain with G-Cter in ubiquitin)). A Cell attachment site motif is present at residues 28 to 30 (RGD). Basic and acidic residues predominate over residues 33–43 (GPKESKKKVET).

Belongs to the lentiviruses Tat family. In terms of assembly, interacts with host CCNT1. Associates with the P-TEFb complex composed at least of Tat, P-TEFb (CDK9 and CCNT1), TAR RNA, RNA Pol II. Recruits the HATs CREBBP, TAF1/TFIID, EP300, PCAF and GCN5L2. Interacts with host KAT5/Tip60; this interaction targets the latter to degradation. Interacts with the host deacetylase SIRT1. Interacts with host capping enzyme RNGTT; this interaction stimulates RNGTT. Binds to host KDR, and to the host integrins ITGAV/ITGB3 and ITGA5/ITGB1. Interacts with host KPNB1/importin beta-1 without previous binding to KPNA1/importin alpha-1. Interacts with EIF2AK2. Interacts with host nucleosome assembly protein NAP1L1; this interaction may be required for the transport of Tat within the nucleus, since the two proteins interact at the nuclear rim. Interacts with host C1QBP/SF2P32; this interaction involves lysine-acetylated Tat. Interacts with the host chemokine receptors CCR2, CCR3 and CXCR4. Interacts with host DPP4/CD26; this interaction may trigger an anti-proliferative effect. Interacts with host LDLR. Interacts with the host extracellular matrix metalloproteinase MMP1. Interacts with host PRMT6; this interaction mediates Tat's methylation. Interacts with, and is ubiquitinated by MDM2/Hdm2. Interacts with host PSMC3 and HTATIP2. Interacts with STAB1; this interaction may overcome SATB1-mediated repression of IL2 and IL2RA (interleukin) in T cells by binding to the same domain than HDAC1. Interacts (when acetylated) with human CDK13, thereby increasing HIV-1 mRNA splicing and promoting the production of the doubly spliced HIV-1 protein Nef. Post-translationally, acetylation by EP300, CREBBP, GCN5L2/GCN5 and PCAF regulates the transactivation activity of Tat. In terms of processing, phosphorylated by EIF2AK2 on serine and threonine residues adjacent to the basic region important for TAR RNA binding and function. Phosphorylation of Tat by EIF2AK2 is dependent on the prior activation of EIF2AK2 by dsRNA. Asymmetrical arginine methylation by host PRMT6 seems to diminish the transactivation capacity of Tat and affects the interaction with host CCNT1. Post-translationally, polyubiquitination by MDM2 does not target Tat to degradation, but activates its transactivation function and fosters interaction with CCNT1 and TAR RNA.

The protein localises to the host nucleus. It localises to the host nucleolus. It is found in the host cytoplasm. The protein resides in the secreted. Transcriptional activator that increases RNA Pol II processivity, thereby increasing the level of full-length viral transcripts. Recognizes a hairpin structure at the 5'-LTR of the nascent viral mRNAs referred to as the transactivation responsive RNA element (TAR) and recruits the cyclin T1-CDK9 complex (P-TEFb complex) that will in turn hyperphosphorylate the RNA polymerase II to allow efficient elongation. The CDK9 component of P-TEFb and other Tat-activated kinases hyperphosphorylate the C-terminus of RNA Pol II that becomes stabilized and much more processive. Other factors such as HTATSF1/Tat-SF1, SUPT5H/SPT5, and HTATIP2 are also important for Tat's function. Besides its effect on RNA Pol II processivity, Tat induces chromatin remodeling of proviral genes by recruiting the histone acetyltransferases (HATs) CREBBP, EP300 and PCAF to the chromatin. This also contributes to the increase in proviral transcription rate, especially when the provirus integrates in transcriptionally silent region of the host genome. To ensure maximal activation of the LTR, Tat mediates nuclear translocation of NF-kappa-B by interacting with host RELA. Through its interaction with host TBP, Tat may also modulate transcription initiation. Tat can reactivate a latently infected cell by penetrating in it and transactivating its LTR promoter. In the cytoplasm, Tat is thought to act as a translational activator of HIV-1 mRNAs. Its function is as follows. Extracellular circulating Tat can be endocytosed by surrounding uninfected cells via the binding to several surface receptors such as CD26, CXCR4, heparan sulfate proteoglycans (HSPG) or LDLR. Neurons are rarely infected, but they internalize Tat via their LDLR. Endosomal low pH allows Tat to cross the endosome membrane to enter the cytosol and eventually further translocate into the nucleus, thereby inducing severe cell dysfunctions ranging from cell activation to cell death. Through its interaction with nuclear HATs, Tat is potentially able to control the acetylation-dependent cellular gene expression. Tat seems to inhibit the HAT activity of KAT5/Tip60 and TAF1, and consequently modify the expression of specific cellular genes. Modulates the expression of many cellular genes involved in cell survival, proliferation or in coding for cytokines (such as IL10) or cytokine receptors. May be involved in the derepression of host interleukin IL2 expression. Mediates the activation of cyclin-dependent kinases and dysregulation of microtubule network. Tat plays a role in T-cell and neurons apoptosis. Tat induced neurotoxicity and apoptosis probably contribute to neuroAIDS. Host extracellular matrix metalloproteinase MMP1 cleaves Tat and decreases Tat's mediated neurotoxicity. Circulating Tat also acts as a chemokine-like and/or growth factor-like molecule that binds to specific receptors on the surface of the cells, affecting many cellular pathways. In the vascular system, Tat binds to ITGAV/ITGB3 and ITGA5/ITGB1 integrins dimers at the surface of endothelial cells and competes with bFGF for heparin-binding sites, leading to an excess of soluble bFGF. Binds to KDR/VEGFR-2. All these Tat-mediated effects enhance angiogenesis in Kaposi's sarcoma lesions. The sequence is that of Protein Tat from Homo sapiens (Human).